Reading from the N-terminus, the 302-residue chain is tRNA pseudouridine synthase B (302 aa).

The active-site Nucleophile is the Asp-47.

It belongs to the pseudouridine synthase TruB family. Type 1 subfamily.

The enzyme catalyses uridine(55) in tRNA = pseudouridine(55) in tRNA. Its function is as follows. Responsible for synthesis of pseudouridine from uracil-55 in the psi GC loop of transfer RNAs. The protein is tRNA pseudouridine synthase B of Methylobacillus flagellatus (strain ATCC 51484 / DSM 6875 / VKM B-1610 / KT).